The chain runs to 419 residues: UDP-N-acetylglucosamine 1-carboxyvinyltransferase 2 (419 aa).

Residue lysine 22–asparagine 23 coordinates phosphoenolpyruvate. Arginine 92 contributes to the UDP-N-acetyl-alpha-D-glucosamine binding site. Cysteine 116 acts as the Proton donor in catalysis. Position 116 is a 2-(S-cysteinyl)pyruvic acid O-phosphothioketal (cysteine 116). UDP-N-acetyl-alpha-D-glucosamine is bound by residues arginine 121–leucine 125, aspartate 306, and isoleucine 328.

This sequence belongs to the EPSP synthase family. MurA subfamily.

Its subcellular location is the cytoplasm. The enzyme catalyses phosphoenolpyruvate + UDP-N-acetyl-alpha-D-glucosamine = UDP-N-acetyl-3-O-(1-carboxyvinyl)-alpha-D-glucosamine + phosphate. The protein operates within cell wall biogenesis; peptidoglycan biosynthesis. Its function is as follows. Cell wall formation. Adds enolpyruvyl to UDP-N-acetylglucosamine. The chain is UDP-N-acetylglucosamine 1-carboxyvinyltransferase 2 from Streptococcus pyogenes serotype M1.